Reading from the N-terminus, the 213-residue chain is Probable nicotinate-nucleotide adenylyltransferase (213 aa).

Belongs to the NadD family.

The catalysed reaction is nicotinate beta-D-ribonucleotide + ATP + H(+) = deamido-NAD(+) + diphosphate. Its pathway is cofactor biosynthesis; NAD(+) biosynthesis; deamido-NAD(+) from nicotinate D-ribonucleotide: step 1/1. Catalyzes the reversible adenylation of nicotinate mononucleotide (NaMN) to nicotinic acid adenine dinucleotide (NaAD). The sequence is that of Probable nicotinate-nucleotide adenylyltransferase from Escherichia coli O17:K52:H18 (strain UMN026 / ExPEC).